The following is a 259-amino-acid chain: Nuclear egress protein 1 (259 aa).

A CCCH-type zinc finger spans residues 80–184 (CLDLSPYANE…YVVFQTRTLH (105 aa)).

This sequence belongs to the herpesviridae NEC1 protein family. Forms a heterohexameric complex with NEC2. Interacts with capsid vertex specific component 2/CVC2; this interaction directs the capsid to the host inner nuclear membrane to initiate budding. Post-translationally, phosphorylated at serine residues in the N-terminus. This phosphorylation regulates the localization within the inner nuclear membrane.

The protein resides in the host nucleus inner membrane. Its function is as follows. Plays an essential role in virion nuclear egress, the first step of virion release from infected cell. Within the host nucleus, NEC1 interacts with the newly formed capsid through the vertexes and directs it to the inner nuclear membrane by associating with NEC2. Induces the budding of the capsid at the inner nuclear membrane as well as its envelopment into the perinuclear space. There, the NEC1/NEC2 complex promotes the fusion of the enveloped capsid with the outer nuclear membrane and the subsequent release of the viral capsid into the cytoplasm where it will reach the secondary budding sites in the host Golgi or trans-Golgi network. This chain is Nuclear egress protein 1, found in Homo sapiens (Human).